Consider the following 307-residue polypeptide: Pantothenate kinase (307 aa).

Residue 87 to 94 participates in ATP binding; the sequence is GSVAVGKS.

The protein belongs to the prokaryotic pantothenate kinase family.

The protein localises to the cytoplasm. It carries out the reaction (R)-pantothenate + ATP = (R)-4'-phosphopantothenate + ADP + H(+). The protein operates within cofactor biosynthesis; coenzyme A biosynthesis; CoA from (R)-pantothenate: step 1/5. This Vibrio vulnificus (strain CMCP6) protein is Pantothenate kinase.